A 130-amino-acid polypeptide reads, in one-letter code: Small ribosomal subunit protein uS9 (130 aa).

Belongs to the universal ribosomal protein uS9 family.

The protein is Small ribosomal subunit protein uS9 of Aliivibrio fischeri (strain MJ11) (Vibrio fischeri).